A 433-amino-acid polypeptide reads, in one-letter code: UDP-N-acetylglucosamine 1-carboxyvinyltransferase (433 aa).

34-35 (KN) is a phosphoenolpyruvate binding site. Arginine 104 contributes to the UDP-N-acetyl-alpha-D-glucosamine binding site. Cysteine 128 (proton donor) is an active-site residue. Cysteine 128 bears the 2-(S-cysteinyl)pyruvic acid O-phosphothioketal mark. UDP-N-acetyl-alpha-D-glucosamine-binding residues include aspartate 320 and isoleucine 342.

The protein belongs to the EPSP synthase family. MurA subfamily.

The protein resides in the cytoplasm. The enzyme catalyses phosphoenolpyruvate + UDP-N-acetyl-alpha-D-glucosamine = UDP-N-acetyl-3-O-(1-carboxyvinyl)-alpha-D-glucosamine + phosphate. It participates in cell wall biogenesis; peptidoglycan biosynthesis. In terms of biological role, cell wall formation. Adds enolpyruvyl to UDP-N-acetylglucosamine. The polypeptide is UDP-N-acetylglucosamine 1-carboxyvinyltransferase (Synechococcus sp. (strain CC9605)).